Reading from the N-terminus, the 419-residue chain is 26S proteasome regulatory subunit 8 homolog B (419 aa).

ATP is bound at residue 202–209; it reads GPPGTGKT. K406 is covalently cross-linked (Glycyl lysine isopeptide (Lys-Gly) (interchain with G-Cter in ubiquitin)).

The protein belongs to the AAA ATPase family. As to quaternary structure, component of the 19S regulatory particle (RP/PA700) base subcomplex of the 26S proteasome. The 26S proteasome is composed of a core protease (CP), known as the 20S proteasome, capped at one or both ends by the 19S regulatory particle (RP/PA700). The RP/PA700 complex is composed of at least 17 different subunits in two subcomplexes, the base and the lid, which form the portions proximal and distal to the 20S proteolytic core, respectively.

The protein localises to the cytoplasm. Its subcellular location is the nucleus. Its function is as follows. The 26S proteasome is involved in the ATP-dependent degradation of ubiquitinated proteins. The regulatory (or ATPase) complex confers ATP dependency and substrate specificity to the 26S complex. In Arabidopsis thaliana (Mouse-ear cress), this protein is 26S proteasome regulatory subunit 8 homolog B (RPT6B).